A 114-amino-acid chain; its full sequence is Ribosome-binding factor A (114 aa).

This sequence belongs to the RbfA family. In terms of assembly, monomer. Binds 30S ribosomal subunits, but not 50S ribosomal subunits or 70S ribosomes.

The protein localises to the cytoplasm. One of several proteins that assist in the late maturation steps of the functional core of the 30S ribosomal subunit. Associates with free 30S ribosomal subunits (but not with 30S subunits that are part of 70S ribosomes or polysomes). Required for efficient processing of 16S rRNA. May interact with the 5'-terminal helix region of 16S rRNA. The chain is Ribosome-binding factor A from Vesicomyosocius okutanii subsp. Calyptogena okutanii (strain HA).